The sequence spans 396 residues: MLLKPHSRVQVFEGAEDNLPDRDALRAALAIRQLAEGLTADDLLLVLISGGGSALLPAPIPPVTLEEKQTLTRLLAARGATIQELNTIRKALSQLKGGGLAQAAYPAQVVSLILSDVVGDPVEVIASGPTVASSHSVQDCLHILNRYGLRAALPRSVKTVLSRADSDPHGPRTCGHVLNVIIGSNVLALAEAQRQAEALGYQAVVLSAAMQGDVKSMAQFYGLLAHVARTRLTPSTAGASVEEDAQLHELAAELQIPDLQLEEALETMARGRGPVCLLAGGEPTVQLQGSGRGGRNQELALRVGAELRRWPLGQIDVLFLSGGTDGQDGPTEAAGAWVTPELASQAAAEGLDMATFLAHNDSHTFFCRLQGGAHLLHTGMTGTNVMDTHLLFLRPR.

It belongs to the glycerate kinase type-2 family.

It localises to the cytoplasm. The enzyme catalyses (R)-glycerate + ATP = (2R)-3-phosphoglycerate + ADP + H(+). This is Glycerate kinase (GLYCTK) from Macaca fascicularis (Crab-eating macaque).